A 201-amino-acid polypeptide reads, in one-letter code: MSRYRGPRFKKIRRLGALPGLTNKRPRTVRDLRNQSRSGKKSQYRIRLEEKQKLRFHYGLTERQLINYVRIARKAKGSTGEILIQLLEMRLDNILFRLGMASTIPAARQLVNHRHIFVNGHIVDIPSYRCKPRDIITSKDKPKSGALIKNSIEAFPREELPNHLTLHPAPYKGLINQIIDTKWVGLKINELLVVEYYSRQT.

An S4 RNA-binding domain is found at Met89–Lys149.

It belongs to the universal ribosomal protein uS4 family. Part of the 30S ribosomal subunit. Contacts protein S5. The interaction surface between S4 and S5 is involved in control of translational fidelity.

The protein resides in the plastid. Functionally, one of the primary rRNA binding proteins, it binds directly to 16S rRNA where it nucleates assembly of the body of the 30S subunit. Its function is as follows. With S5 and S12 plays an important role in translational accuracy. The protein is Small ribosomal subunit protein uS4c (rps4) of Cuscuta exaltata (Tall dodder).